We begin with the raw amino-acid sequence, 901 residues long: Core protein VP3 (901 aa).

The protein belongs to the orbivirus VP3 family.

It is found in the virion. In terms of biological role, the VP3 protein is one of the five proteins (with VP1, VP4, VP6 and VP7) which form the inner capsid of the virus. In Bluetongue virus 11 (isolate USA) (BTV 11), this protein is Core protein VP3 (Segment-3).